The following is a 475-amino-acid chain: Argininosuccinate lyase 1 (475 aa).

The protein belongs to the lyase 1 family. Argininosuccinate lyase subfamily.

It localises to the cytoplasm. It catalyses the reaction 2-(N(omega)-L-arginino)succinate = fumarate + L-arginine. The protein operates within amino-acid biosynthesis; L-arginine biosynthesis; L-arginine from L-ornithine and carbamoyl phosphate: step 3/3. The protein is Argininosuccinate lyase 1 of Pseudomonas fluorescens (strain Pf0-1).